A 297-amino-acid chain; its full sequence is Homoserine kinase (297 aa).

82 to 92 (PLTRGLGSSAS) is a binding site for ATP.

Belongs to the GHMP kinase family. Homoserine kinase subfamily.

It is found in the cytoplasm. The enzyme catalyses L-homoserine + ATP = O-phospho-L-homoserine + ADP + H(+). It functions in the pathway amino-acid biosynthesis; L-threonine biosynthesis; L-threonine from L-aspartate: step 4/5. Its function is as follows. Catalyzes the ATP-dependent phosphorylation of L-homoserine to L-homoserine phosphate. In Bacillus cereus (strain G9842), this protein is Homoserine kinase.